Here is a 241-residue protein sequence, read N- to C-terminus: tRNA (guanine-N(1)-)-methyltransferase (241 aa).

S-adenosyl-L-methionine contacts are provided by residues glycine 112 and 131–136; that span reads LGDFVL.

The protein belongs to the RNA methyltransferase TrmD family. As to quaternary structure, homodimer.

The protein localises to the cytoplasm. It catalyses the reaction guanosine(37) in tRNA + S-adenosyl-L-methionine = N(1)-methylguanosine(37) in tRNA + S-adenosyl-L-homocysteine + H(+). Specifically methylates guanosine-37 in various tRNAs. The protein is tRNA (guanine-N(1)-)-methyltransferase of Clostridium novyi (strain NT).